Consider the following 1097-residue polypeptide: Protein STICHEL-like 3 (1097 aa).

Disordered regions lie at residues 1–22, 74–168, 220–293, 321–358, and 400–436; these read MTTTTTTTTRVASSSSTRNNRI, SLRD…YRIG, NVRP…GFGE, GRSLSCGMSDSKGGRKGETNERNGSDKMMIQSDDDSSS, and DSDLASEGRSGEKKHKKKSHVNARHRHRQQHQSLTEK. Positions 10 to 20 are enriched in polar residues; the sequence is RVASSSSTRNN. A compositionally biased stretch (basic and acidic residues) spans 95 to 113; sequence LPKKGDLVEGGRRSVDLKK. The segment covering 126-136 has biased composition (polar residues); that stretch reads PVVNFGTSKVT. Positions 137–168 are enriched in basic and acidic residues; that stretch reads PSDERSGPVSGERDSGRRVKREESSRKSYRIG. The span at 227 to 241 shows a compositional bias: gly residues; it reads YGGGGGGGNTRGCAG. The span at 245–259 shows a compositional bias: basic residues; it reads RPKRRKFRGTRRVRG. 2 stretches are compositionally biased toward basic and acidic residues: residues 281 to 291 and 332 to 345; these read VEKHDGEKEGF and KGGRKGETNERNGS. Positions 346 to 358 are enriched in low complexity; sequence DKMMIQSDDDSSS. A compositionally biased stretch (basic residues) spans 411–429; that stretch reads EKKHKKKSHVNARHRHRQQ. 472–479 provides a ligand contact to ATP; it reads GPNGTGKT. Zn(2+)-binding residues include cysteine 491, cysteine 500, cysteine 503, and cysteine 506. Positions 742-770 form a coiled coil; the sequence is KEDMEKLRQALKTLSEAEKQLRVSNDKLT. Disordered regions lie at residues 790-828, 913-932, and 956-1003; these read SSTADTGGRESSDHHLDPSSDAAGGRSSGLDRRRGDSRK, DPRNNVHHHHHHPTVKDKSL, and VTES…SQSI. Basic and acidic residues-rich tracts occupy residues 796–807 and 818–828; these read GGRESSDHHLDP and GLDRRRGDSRK. A compositionally biased stretch (polar residues) spans 993 to 1003; it reads ASQSQNQSQSI.

The protein belongs to the DnaX/STICHEL family.

The polypeptide is Protein STICHEL-like 3 (Arabidopsis thaliana (Mouse-ear cress)).